A 1077-amino-acid polypeptide reads, in one-letter code: Zinc finger protein 518B (1077 aa).

Positions 9 to 30 are enriched in polar residues; that stretch reads YTTQVNGGPSSLTMSPKQPNRA. The interval 9-35 is disordered; that stretch reads YTTQVNGGPSSLTMSPKQPNRATRTER. 2 consecutive C2H2-type zinc fingers follow at residues 160–182 and 188–211; these read FICS…LVKH and YRCE…RRVH. The disordered stretch occupies residues 372 to 397; that stretch reads TSRGDGGTSECLSTEKGSGGQKKMLS. A Glycyl lysine isopeptide (Lys-Gly) (interchain with G-Cter in SUMO2) cross-link involves residue lysine 479. Disordered regions lie at residues 561–585, 599–622, 675–739, and 825–852; these read LVSS…GQVS, GEDK…ETAG, KPSS…GSRQ, and QPLT…RKED. Over residues 564–574 the composition is skewed to basic and acidic residues; sequence SDRKLEDKQME. Polar residues-rich tracts occupy residues 605–621 and 675–688; these read SQQP…SETA and KPSS…QRRS. Residues lysine 847 and lysine 861 each participate in a glycyl lysine isopeptide (Lys-Gly) (interchain with G-Cter in SUMO2) cross-link. The interval 895–914 is disordered; the sequence is QVNSTKKKNKMQANPGRYFK. A C2H2-type 3 zinc finger spans residues 1039-1061; the sequence is FKCWFCGRLYEDQEEWMSHGQRH.

It belongs to the krueppel C2H2-type zinc-finger protein family.

Its subcellular location is the nucleus. In terms of biological role, through its association with the EHMT1-EHMT2/G9A and PRC2/EED-EZH2 histone methyltransferase complexes may function in gene silencing, regulating repressive post-translational methylation of histone tails at promoters of target genes. The chain is Zinc finger protein 518B (Znf518b) from Mus musculus (Mouse).